The chain runs to 466 residues: ATP synthase subunit beta (466 aa).

156-163 (GGAGVGKT) is an ATP binding site.

This sequence belongs to the ATPase alpha/beta chains family. F-type ATPases have 2 components, CF(1) - the catalytic core - and CF(0) - the membrane proton channel. CF(1) has five subunits: alpha(3), beta(3), gamma(1), delta(1), epsilon(1). CF(0) has three main subunits: a(1), b(2) and c(9-12). The alpha and beta chains form an alternating ring which encloses part of the gamma chain. CF(1) is attached to CF(0) by a central stalk formed by the gamma and epsilon chains, while a peripheral stalk is formed by the delta and b chains.

Its subcellular location is the cell inner membrane. It carries out the reaction ATP + H2O + 4 H(+)(in) = ADP + phosphate + 5 H(+)(out). Functionally, produces ATP from ADP in the presence of a proton gradient across the membrane. The catalytic sites are hosted primarily by the beta subunits. This chain is ATP synthase subunit beta, found in Dechloromonas aromatica (strain RCB).